Consider the following 40-residue polypeptide: Bomanin Short 6 (40 aa).

An N-terminal signal peptide occupies residues 1–18 (MKLLSITFLFGLLALASA). A propeptide spans 19–23 (NPLSP) (removed by a dipeptidylpeptidase). C32 and C35 form a disulfide bridge.

Belongs to the bomanin family.

Its subcellular location is the secreted. Functionally, secreted immune-induced peptide induced by Toll signaling. Has a role in resistance to bacterial and fungal infections. The strength of antimicrobial activity appears to correlate with the overall level of expression. This is Bomanin Short 6 from Drosophila melanogaster (Fruit fly).